Reading from the N-terminus, the 346-residue chain is Olfactory receptor 13D1 (346 aa).

Topologically, residues 1–57 (MYRFTDFDVSNISIYLNHVLFYTTQQAGDLEHMETRNYSAMTEFFLVGLSQYPELQL) are extracellular. A glycan (N-linked (GlcNAc...) asparagine) is linked at N37. The chain crosses the membrane as a helical span at residues 58–78 (FLFLLCLIMYMIILLGNSLLI). Topologically, residues 79-86 (IITILDSR) are cytoplasmic. A helical transmembrane segment spans residues 87–107 (LHTPMYFFLGNLSFLDICYTS). The Extracellular segment spans residues 108 to 131 (SSIPPMLIIFMSERKSISFIGCAL). Cysteines 129 and 221 form a disulfide. The helical transmembrane segment at 132–152 (QMVVSLGLGSTECVLLAVMAY) threads the bilayer. The Cytoplasmic segment spans residues 153–171 (DHYVAICNPLRYSIIMNGV). Residues 172–192 (LYVQMAAWSWIIGCLTSLLQT) traverse the membrane as a helical segment. The Extracellular portion of the chain corresponds to 193 to 229 (VLTMMLPFCGNNVIDHITCEILALLKLVCSDITINVL). A helical membrane pass occupies residues 230 to 249 (IMTVTNIVSLVILLLLIFIS). At 250-269 (YVFILSSILRINCAEGRKKA) the chain is on the cytoplasmic side. A helical transmembrane segment spans residues 270-290 (FSTCSAHSIVVILFYGSALFM). Topologically, residues 291-303 (YMKPKSKNTNTSD) are extracellular. The N-linked (GlcNAc...) asparagine glycan is linked to N300. A helical membrane pass occupies residues 304–324 (EIIGLSYGVVSPMLNPIIYSL). At 325 to 346 (RNKEVKEAVKKVLSRHLHLLKM) the chain is on the cytoplasmic side.

The protein belongs to the G-protein coupled receptor 1 family.

It localises to the cell membrane. Odorant receptor. The protein is Olfactory receptor 13D1 (OR13D1) of Homo sapiens (Human).